The following is a 217-amino-acid chain: Adenylate kinase (217 aa).

Position 10 to 15 (10 to 15) interacts with ATP; that stretch reads GAGKGT. An NMP region spans residues 30 to 59; that stretch reads STGDMFRAAMKEETQLGLEAKSFIDKGELV. AMP-binding positions include Thr-31, Arg-36, 57–59, 85–88, and Gln-92; these read ELV and GFPR. The segment at 126–163 is LID; sequence GRRICKNCGATYHLVFNPPAKENVCDKCGGELYQRADD. Position 127 (Arg-127) interacts with ATP. Zn(2+) is bound by residues Cys-130 and Cys-133. 136–137 contributes to the ATP binding site; the sequence is TY. Zn(2+)-binding residues include Cys-150 and Cys-153. Residues Arg-160 and Arg-171 each contribute to the AMP site. Lys-199 provides a ligand contact to ATP.

The protein belongs to the adenylate kinase family. As to quaternary structure, monomer.

The protein localises to the cytoplasm. It catalyses the reaction AMP + ATP = 2 ADP. The protein operates within purine metabolism; AMP biosynthesis via salvage pathway; AMP from ADP: step 1/1. Catalyzes the reversible transfer of the terminal phosphate group between ATP and AMP. Plays an important role in cellular energy homeostasis and in adenine nucleotide metabolism. In Bacillus pumilus (strain SAFR-032), this protein is Adenylate kinase.